Here is a 331-residue protein sequence, read N- to C-terminus: L-lactate dehydrogenase A chain (331 aa).

Residues 29–57 (GMVGMASAISILLKDLCDELAMVDVMEDK) and Arg98 contribute to the NAD(+) site. Substrate contacts are provided by Arg105, Asn137, and Arg168. Asn137 provides a ligand contact to NAD(+). The active-site Proton acceptor is the His192. Thr247 lines the substrate pocket.

The protein belongs to the LDH/MDH superfamily. LDH family. Homotetramer.

It localises to the cytoplasm. The catalysed reaction is (S)-lactate + NAD(+) = pyruvate + NADH + H(+). The protein operates within fermentation; pyruvate fermentation to lactate; (S)-lactate from pyruvate: step 1/1. Its function is as follows. Interconverts simultaneously and stereospecifically pyruvate and lactate with concomitant interconversion of NADH and NAD(+). The protein is L-lactate dehydrogenase A chain (ldha) of Champsocephalus gunnari (Mackerel icefish).